A 287-amino-acid polypeptide reads, in one-letter code: F-actin-capping protein subunit beta (287 aa).

S2 carries the N-acetylserine modification. Phosphoserine is present on residues S85 and S92.

This sequence belongs to the F-actin-capping protein beta subunit family. In terms of assembly, component of the F-actin capping complex, composed of a heterodimer of an alpha and a beta subunit. Interacts with BSP1 (via C-terminus); leading to recruitment of the F-actin capping complex to actin cortical patches and the acomyosin contractile ring.

The protein localises to the cytoplasm. It localises to the cytoskeleton. Its subcellular location is the actin patch. The protein resides in the bud. It is found in the bud tip. Functionally, F-actin-capping proteins bind in a Ca(2+)-independent manner to the fast growing ends of actin filaments (barbed end) thereby blocking the exchange of subunits at these ends. Unlike other capping proteins (such as gelsolin and severin), these proteins do not sever actin filaments. The chain is F-actin-capping protein subunit beta (CAP2) from Saccharomyces cerevisiae (strain ATCC 204508 / S288c) (Baker's yeast).